The sequence spans 474 residues: P2X purinoceptor 2 (474 aa).

Residues 1–42 (MAATHPKAPTAQRLRQGWSAFWDYETPKVIVVRNRPLGVVYR) are Cytoplasmic-facing. A helical transmembrane segment spans residues 43–60 (AVQLLILLYFVWYVFIVQ). The Extracellular segment spans residues 61–333 (KSYQDSETGP…IVHGQAGKFS (273 aa)). 2 residues coordinate ATP: lysine 77 and lysine 79. 3 cysteine pairs are disulfide-bonded: cysteine 121-cysteine 172, cysteine 132-cysteine 155, and cysteine 138-cysteine 166. Residue asparagine 129 is glycosylated (N-linked (GlcNAc...) asparagine). N-linked (GlcNAc...) asparagine glycosylation is present at asparagine 190. Threonine 192 contributes to the ATP binding site. Cysteine 222 and cysteine 232 are oxidised to a cystine. The N-linked (GlcNAc...) asparagine glycan is linked to asparagine 247. Residues cysteine 266 and cysteine 275 are joined by a disulfide bond. Residues serine 292, asparagine 296, and arginine 298 each coordinate ATP. N-linked (GlcNAc...) asparagine glycosylation occurs at asparagine 306. Residue lysine 315 coordinates ATP. The pore-forming motif stretch occupies residues 316–329 (AYGIRIDVIVHGQA). The chain crosses the membrane as a helical span at residues 334 to 354 (LIPTIINLATALTSIGVGSFL). Over 355 to 474 (CDWILLTFMN…PTDPKGLAQL (120 aa)) the chain is Cytoplasmic. Residues 445-474 (PDRCVGQGLPSSESPLQDSTPTDPKGLAQL) are disordered. Positions 453–466 (LPSSESPLQDSTPT) are enriched in polar residues.

This sequence belongs to the P2X receptor family. Homotrimer and heterotrimer; functional P2XRs are organized as homomeric and heteromeric trimers. Homotrimer. Forms heterodimer with P2RX1. Forms heterotrimer with P2RX6. Forms heterotrimer with P2RX3. Express in organ of Corti.

The protein resides in the cell membrane. It carries out the reaction Ca(2+)(in) = Ca(2+)(out). It catalyses the reaction K(+)(in) = K(+)(out). The enzyme catalyses Na(+)(in) = Na(+)(out). With respect to regulation, fast activation by external ATP. Exhibits slow desensitization during prolonged ATP activation. Not sensitive to the ATP agonist:alpha/beta-methylene-ATP. In terms of biological role, ATP-gated nonselective transmembrane cation channel permeable to potassium, sodium and calcium. Activation by extracellular ATP induces a variety of cellular responses, such as excitatory postsynaptic responses in sensory neurons, neuromuscular junctions (NMJ) formation, hearing, perception of taste and peristalsis. In the inner ear, regulates sound transduction and auditory neurotransmission, outer hair cell electromotility, inner ear gap junctions, and K(+) recycling. Mediates synaptic transmission between neurons and from neurons to smooth muscle. The sequence is that of P2X purinoceptor 2 (P2RX2) from Cavia porcellus (Guinea pig).